A 1891-amino-acid chain; its full sequence is Transcription initiation factor TFIID subunit 1 (1891 aa).

3 disordered regions span residues 1 to 34, 154 to 180, and 197 to 224; these read MGPG…AGGG, KLMP…GVSE, and ASEK…SESK. The Protein kinase 1 domain maps to 1-435; the sequence is MGPGWAGLLQ…VTQLHWEDDI (435 aa). Residues 156–165 show a composition bias toward pro residues; it reads MPPPPPPPGP. Over residues 197-208 the composition is skewed to low complexity; sequence ASEKVDFSSSSD. Position 328 is a phosphoserine; by autocatalysis (Ser-328). The disordered stretch occupies residues 535-556; the sequence is PDEKEEATSNSPSKENKKESSL. Residues 538-997 form a histone acetyltransferase (HAT) region; that stretch reads KEEATSNSPS…KIPNKPTQQK (460 aa). An N6-acetyllysine modification is found at Lys-565. Residues Lys-570 and Lys-583 each participate in a glycyl lysine isopeptide (Lys-Gly) (interchain with G-Cter in SUMO2) cross-link. Disordered regions lie at residues 990–1009, 1128–1148, and 1254–1278; these read PNKP…KKTV, MLQN…QERK, and RLKR…MKER. Composition is skewed to basic and acidic residues over residues 995–1004, 1139–1148, and 1254–1270; these read QQKDDKEPQP, SREREEQERK, and RLKR…PPEK. The segment at residues 1216 to 1294 is a DNA-binding region (HMG box); it reads VRIRTTKDEE…CGACGAIGHM (79 aa). The interval 1363 to 1650 is interaction with ASF1A and ASF1B; the sequence is VLKFPKQQLP…TAKEAALEEA (288 aa). A Nuclear localization signal motif is present at residues 1372–1379; the sequence is PPKKKRRV. 2 Bromo domains span residues 1397–1505 and 1519–1628; these read RRRT…LKEK and LLDD…LTEY. One can recognise a Protein kinase 2 domain in the interval 1446–1891; the sequence is MDLQTLRENV…AGDTDLDSDE (446 aa). Disordered regions lie at residues 1651-1676 and 1690-1891; these read ELES…NNTS and SNLS…DSDE. Over residues 1659–1668 the composition is skewed to pro residues; that stretch reads TPGPYTPQPP. Phosphoserine is present on residues Ser-1690 and Ser-1693. Polar residues predominate over residues 1690–1708; it reads SNLSVLDIPSATSEKQLTQ. 2 stretches are compositionally biased toward acidic residues: residues 1711-1723 and 1741-1756; these read GDGD…EEEG and EGED…EEGD. Residues 1764-1778 are compositionally biased toward low complexity; the sequence is LSESGSDSDVESGSL. Phosphoserine is present on residues Ser-1799, Ser-1802, and Ser-1820. Over residues 1830 to 1840 the composition is skewed to polar residues; it reads KSNTQDTSFSS. The segment covering 1846 to 1855 has biased composition (acidic residues); sequence VSEEEEDEEE. Phosphoserine is present on Ser-1847. The span at 1858–1867 shows a compositional bias: polar residues; sequence SGPSVLSQVH.

Belongs to the TAF1 family. In terms of assembly, component of the TFIID basal transcription factor complex, composed of TATA-box-binding protein TBP, and a number of TBP-associated factors (TAFs). TFIID consists of at least TBP, TAF1, TAF2, TAF3, TAF4, TAF5, TAF6, TAF7, TAF8, TAF9, TAF10, TAF11, TAF12 and TAF13. Interacts with TAF7; the interaction is direct. TAF1, when part of the TFIID complex, interacts with C-terminus of TP53. Part of a TFIID-containing RNA polymerase II pre-initiation complex that is composed of TBP and at least GTF2A1, GTF2A2, GTF2E1, GTF2E2, GTF2F1, GTF2H2, GTF2H3, GTF2H4, GTF2H5, GTF2B, TCEA1, ERCC2, ERCC3, TAF1, TAF2, TAF3, TAF4, TAF5, TAF6, TAF7, TAF8, TAF9, TAF10, TAF11, TAF12 and TAF13. Component of some MLL1/MLL complex, at least composed of the core components KMT2A/MLL1, ASH2L, HCFC1/HCF1, WDR5 and RBBP5, as well as the facultative components BACC1, CHD8, E2F6, HSP70, INO80C, KANSL1, LAS1L, MAX, MCRS1, MGA, KAT8/MOF, PELP1, PHF20, PRP31, RING2, RUVB1/TIP49A, RUVB2/TIP49B, SENP3, TAF1, TAF4, TAF6, TAF7, TAF9 and TEX10. RB1 interacts with the N-terminal domain of TAF1. Interacts with ASF1A and ASF1B. Interacts (via bromo domains) with acetylated lysine residues on the N-terminus of histone H1.4, H2A, H2B, H3 and H4 (in vitro). It depends on Mg(2+) as a cofactor. Phosphorylated by casein kinase II in vitro.

Its subcellular location is the nucleus. The catalysed reaction is L-seryl-[protein] + ATP = O-phospho-L-seryl-[protein] + ADP + H(+). It carries out the reaction L-threonyl-[protein] + ATP = O-phospho-L-threonyl-[protein] + ADP + H(+). It catalyses the reaction L-lysyl-[protein] + acetyl-CoA = N(6)-acetyl-L-lysyl-[protein] + CoA + H(+). With respect to regulation, autophosphorylates on Ser residues. Inhibited by retinoblastoma tumor suppressor protein, RB1. Binding to TAF1 or CIITA inhibits the histone acetyltransferase activity. The TFIID basal transcription factor complex plays a major role in the initiation of RNA polymerase II (Pol II)-dependent transcription. TFIID recognizes and binds promoters with or without a TATA box via its subunit TBP, a TATA-box-binding protein, and promotes assembly of the pre-initiation complex (PIC). The TFIID complex consists of TBP and TBP-associated factors (TAFs), including TAF1, TAF2, TAF3, TAF4, TAF5, TAF6, TAF7, TAF8, TAF9, TAF10, TAF11, TAF12 and TAF13. TAF1 is the largest component and core scaffold of the TFIID complex, involved in nucleating complex assembly. TAF1 forms a promoter DNA binding subcomplex of TFIID, together with TAF7 and TAF2. Contains novel N- and C-terminal Ser/Thr kinase domains which can autophosphorylate or transphosphorylate other transcription factors. Phosphorylates TP53 on 'Thr-55' which leads to MDM2-mediated degradation of TP53. Phosphorylates GTF2A1 and GTF2F1 on Ser residues. Possesses DNA-binding activity. Exhibits histone acetyltransferase activity towards histones H3 and H4. Essential for progression of the G1 phase of the cell cycle. This Mus musculus (Mouse) protein is Transcription initiation factor TFIID subunit 1.